The chain runs to 262 residues: Probable proteasome subunit beta type-7 (262 aa).

Belongs to the peptidase T1B family. As to quaternary structure, the 26S proteasome consists of a 20S proteasome core and two 19S regulatory subunits. The 20S proteasome core is composed of 28 subunits that are arranged in four stacked rings, resulting in a barrel-shaped structure. The two end rings are each formed by seven alpha subunits, and the two central rings are each formed by seven beta subunits. The catalytic chamber with the active sites is on the inside of the barrel.

Its subcellular location is the cytoplasm. The protein localises to the nucleus. Functionally, non-catalytic component of the proteasome, a multicatalytic proteinase complex which is characterized by its ability to cleave peptides with Arg, Phe, Tyr, Leu, and Glu adjacent to the leaving group at neutral or slightly basic pH. The proteasome has an ATP-dependent proteolytic activity. The chain is Probable proteasome subunit beta type-7 from Schizosaccharomyces pombe (strain 972 / ATCC 24843) (Fission yeast).